Consider the following 87-residue polypeptide: Small ribosomal subunit protein bS21m (87 aa).

The protein belongs to the bacterial ribosomal protein bS21 family. Component of the mitochondrial ribosome small subunit (28S) which comprises a 12S rRNA and about 30 distinct proteins.

The protein localises to the mitochondrion. The sequence is that of Small ribosomal subunit protein bS21m (Mrps21) from Mus musculus (Mouse).